A 202-amino-acid chain; its full sequence is Small ribosomal subunit protein uS4c (202 aa).

The 64-residue stretch at 90–153 (MRLDNIIFRL…KSQAIISKNL (64 aa)) folds into the S4 RNA-binding domain.

The protein belongs to the universal ribosomal protein uS4 family. Part of the 30S ribosomal subunit. Contacts protein S5. The interaction surface between S4 and S5 is involved in control of translational fidelity.

It localises to the plastid. The protein localises to the chloroplast. In terms of biological role, one of the primary rRNA binding proteins, it binds directly to 16S rRNA where it nucleates assembly of the body of the 30S subunit. Functionally, with S5 and S12 plays an important role in translational accuracy. This chain is Small ribosomal subunit protein uS4c (rps4), found in Rosulabryum capillare (Capillary thread-moss).